A 1620-amino-acid polypeptide reads, in one-letter code: ABC-type organic anion transporter ABCA8A (1620 aa).

Transmembrane regions (helical) follow at residues 30-50 (TFLE…FLQL), 224-244 (CFLF…SAGV), 263-283 (SAFW…VTLL), 294-314 (VFLT…LSLI), 328-348 (FLTD…GFTA), 357-377 (LEWL…VQLL), and 397-417 (IGTI…TFYF). 2 N-linked (GlcNAc...) asparagine glycosylation sites follow: Asn-454 and Asn-482. An ABC transporter 1 domain is found at 478 to 713 (IRIRNLTKDY…WGIGYHLSLQ (236 aa)). 514-521 (GHSGAGKS) contacts ATP. The chain crosses the membrane as a helical span at residues 861 to 881 (IVILILVLGIGLLHILSANIY). A glycan (N-linked (GlcNAc...) asparagine) is linked at Asn-967. 7 helical membrane-spanning segments follow: residues 979–999 (CFPV…APSA), 1019–1039 (YLAY…YISM), 1068–1088 (ALFE…AFYA), 1105–1125 (ILYV…ISFI), 1133–1153 (SGLW…FMLI), 1159–1179 (ISLF…CTLL), and 1196–1216 (EYSY…VVIL). In terms of domain architecture, ABC transporter 2 spans 1284-1517 (LRKEYKGKKK…FGKEYLLEMK (234 aa)). 1322-1329 (GHNGAGKS) lines the ATP pocket.

Belongs to the ABC transporter superfamily. ABCA family. As to expression, expressed in lung, heart, liver, skeletal muscle and testis. Highly expressed in the liver, and is also abundant in heart and skeletal muscle. Highly expressed in heart.

The protein resides in the cell membrane. It localises to the basolateral cell membrane. The catalysed reaction is taurocholate(in) + ATP + H2O = taurocholate(out) + ADP + phosphate + H(+). It carries out the reaction cholesterol(in) + ATP + H2O = cholesterol(out) + ADP + phosphate + H(+). Cholesterol efflux is increased by extracellularly applied taurocholate. In terms of biological role, mediates cholesterol and taurocholate efflux. Through the interaction with ABCA1 potentiates the cholesterol efflux to lipid-free APOA1, in turn regulates high-density lipoprotein cholesterol levels. The sequence is that of ABC-type organic anion transporter ABCA8A from Mus musculus (Mouse).